Consider the following 149-residue polypeptide: Protein-export protein SecB 2 (149 aa).

The protein belongs to the SecB family. Homotetramer, a dimer of dimers. One homotetramer interacts with 1 SecA dimer.

The protein resides in the cytoplasm. One of the proteins required for the normal export of preproteins out of the cell cytoplasm. It is a molecular chaperone that binds to a subset of precursor proteins, maintaining them in a translocation-competent state. It also specifically binds to its receptor SecA. This Francisella tularensis subsp. tularensis (strain FSC 198) protein is Protein-export protein SecB 2.